Reading from the N-terminus, the 249-residue chain is DNA repair protein RecO (249 aa).

This sequence belongs to the RecO family.

Involved in DNA repair and RecF pathway recombination. This is DNA repair protein RecO from Rhodopseudomonas palustris (strain HaA2).